The sequence spans 618 residues: Auxin efflux carrier component 3a (618 aa).

The Extracellular portion of the chain corresponds to 1–6 (MISGHD). Residues 7-27 (FYTVMAAVVPLYVAMFLAYGS) form a helical membrane-spanning segment. Residues 28–38 (VRWWGIFTPDQ) are Cytoplasmic-facing. The helical transmembrane segment at 39–59 (CSGINRFVAIFAVPLLSFHFI) threads the bilayer. V51 is a (indol-3-yl)acetate binding site. The Extracellular portion of the chain corresponds to 60 to 70 (STNDPYAMNLR). Residues 71–90 (FLAADTLQKLLVLAGLAAWS) form a helical membrane-spanning segment. Residues 91-104 (RLPSRTGAPRLDWS) are Cytoplasmic-facing. A helical membrane pass occupies residues 105 to 125 (ITLFSLSTLPNTLVMGIPLLI). (indol-3-yl)acetate-binding residues include N115 and L117. The Extracellular segment spans residues 126 to 134 (AMYGPYSGS). Residues 135-155 (LMVQIVVLQCIIWYTLMLFLF) traverse the membrane as a helical segment. Y148 lines the (indol-3-yl)acetate pocket. The Cytoplasmic segment spans residues 156 to 478 (EFRAARMLIA…LIRNPNTYSS (323 aa)). Residues 281–293 (SLQSSRGPTPRQS) are compositionally biased toward polar residues. The disordered stretch occupies residues 281–312 (SLQSSRGPTPRQSNFDEHSARPPKPPATTTGA). A helical transmembrane segment spans residues 479–499 (LLGLAWSLVAFRWHVSMPAIV). Residues 500–502 (EKS) lie on the Extracellular side of the membrane. A helical membrane pass occupies residues 503 to 523 (ISILSDAGLGMAMFSLGLFMA). Topologically, residues 524–539 (LQPSIIACGKSAAVVS) are cytoplasmic. A helical transmembrane segment spans residues 540–560 (MAVRFLAGPAVMAAASIAIGL). At 561–563 (RGT) the chain is on the extracellular side. A helical transmembrane segment spans residues 564–584 (LLHVAIVQAALPQGIVPFVFA). The (indol-3-yl)acetate site is built by I578 and V579. Residues 585 to 597 (KEYNVHPAILSTA) lie on the Cytoplasmic side of the membrane. A helical transmembrane segment spans residues 598 to 618 (VIFGMLIALPITLLYYILLGL).

Belongs to the auxin efflux carrier (TC 2.A.69.1) family. As to quaternary structure, homodimer. Expressed in coleoptiles, roots, vascular bundles of leaves, shoots, lamina joints and vascular bundles of the lemma and filament. Expressed in stem bases, stems, leaves and young panicles.

It localises to the cell membrane. Functionally, acts as a component of the auxin efflux carrier. Involved in the polar auxin transport which may regulate crown root development and response to water stress. This is Auxin efflux carrier component 3a from Oryza sativa subsp. japonica (Rice).